A 685-amino-acid polypeptide reads, in one-letter code: Glycine--tRNA ligase beta subunit (685 aa).

The tract at residues 58–77 is disordered; the sequence is GLTAQSPTTREERKGPRTDA. A compositionally biased stretch (basic and acidic residues) spans 66–77; sequence TREERKGPRTDA.

Belongs to the class-II aminoacyl-tRNA synthetase family. As to quaternary structure, tetramer of two alpha and two beta subunits.

Its subcellular location is the cytoplasm. The catalysed reaction is tRNA(Gly) + glycine + ATP = glycyl-tRNA(Gly) + AMP + diphosphate. This chain is Glycine--tRNA ligase beta subunit, found in Paracoccus denitrificans (strain Pd 1222).